The primary structure comprises 69 residues: DNA gyrase inhibitor YacG (69 aa).

Residues Cys7, Cys10, Cys26, and Cys30 each contribute to the Zn(2+) site.

The protein belongs to the DNA gyrase inhibitor YacG family. Interacts with GyrB. Requires Zn(2+) as cofactor.

Functionally, inhibits all the catalytic activities of DNA gyrase by preventing its interaction with DNA. Acts by binding directly to the C-terminal domain of GyrB, which probably disrupts DNA binding by the gyrase. This is DNA gyrase inhibitor YacG from Shewanella sp. (strain W3-18-1).